The chain runs to 106 residues: Small ribosomal subunit protein uS10 (106 aa).

The protein belongs to the universal ribosomal protein uS10 family. As to quaternary structure, part of the 30S ribosomal subunit.

Its function is as follows. Involved in the binding of tRNA to the ribosomes. This Synechococcus sp. (strain CC9605) protein is Small ribosomal subunit protein uS10.